The sequence spans 244 residues: ATP synthase subunit a, chloroplastic (244 aa).

Transmembrane regions (helical) follow at residues 35–55 (QVLITSWVVIAILLGSAVIAV), 92–112 (VPFIGTMFLFIFVSNWSGALL), 131–151 (INTTVALALLTSVAYFYAGLS), 196–216 (LVVVVLVSLVPSVVPIPVMFL), and 217–237 (GLFTSGIQALIFATLAAAYIG).

The protein belongs to the ATPase A chain family. In terms of assembly, F-type ATPases have 2 components, CF(1) - the catalytic core - and CF(0) - the membrane proton channel. CF(1) has five subunits: alpha(3), beta(3), gamma(1), delta(1), epsilon(1). CF(0) has four main subunits: a, b, b' and c.

The protein localises to the plastid. Its subcellular location is the chloroplast thylakoid membrane. Functionally, key component of the proton channel; it plays a direct role in the translocation of protons across the membrane. The chain is ATP synthase subunit a, chloroplastic from Gossypium hirsutum (Upland cotton).